A 241-amino-acid polypeptide reads, in one-letter code: Polyol phosphate phosphatase PYP1 (241 aa).

D9 serves as the catalytic Nucleophile. Mg(2+) contacts are provided by D9, D11, and D179. D11 functions as the Proton donor in the catalytic mechanism.

The protein belongs to the HAD-like hydrolase superfamily. It depends on Mg(2+) as a cofactor.

The protein localises to the cytoplasm. It is found in the nucleus. The enzyme catalyses D-ribitol 5-phosphate + H2O = ribitol + phosphate. The catalysed reaction is D-sorbitol 6-phosphate + H2O = D-sorbitol + phosphate. It catalyses the reaction sn-glycerol 1-phosphate + H2O = glycerol + phosphate. It carries out the reaction D-erythrose 4-phosphate + H2O = D-erythrose + phosphate. Functionally, hydrolyzes sugar alcohol (polyol) phosphates. Dephosphorylates a variety of substrates, including: sn-glycerol 1-phosphate (D-glycerol 3-phosphate), D-ribitol 5-phosphate, D-sorbitol 6-phosphate (D-glucitol 6-phosphate), and D-erythrose 4-phosphate. Prevents accumulation of toxic levels of polyol phosphates, which can impair glycolysis by inhibiting glucose-6-phosphate isomerase. In Saccharomyces cerevisiae (strain ATCC 204508 / S288c) (Baker's yeast), this protein is Polyol phosphate phosphatase PYP1.